The following is a 498-amino-acid chain: Lysine--tRNA ligase (498 aa).

Mg(2+) is bound by residues glutamate 407 and glutamate 414.

The protein belongs to the class-II aminoacyl-tRNA synthetase family. In terms of assembly, homodimer. Mg(2+) is required as a cofactor.

It localises to the cytoplasm. The enzyme catalyses tRNA(Lys) + L-lysine + ATP = L-lysyl-tRNA(Lys) + AMP + diphosphate. The chain is Lysine--tRNA ligase from Rhizobium johnstonii (strain DSM 114642 / LMG 32736 / 3841) (Rhizobium leguminosarum bv. viciae).